The chain runs to 458 residues: Chromosomal replication initiator protein DnaA (458 aa).

Residues 1–79 are domain I, interacts with DnaA modulators; it reads MSLAIWQECL…ENPNHSVKIR (79 aa). The segment at 79-120 is domain II; sequence RLMVGNVSSVEKKPAKQIPTQAPLTNQPWEGESKAHRVPHKS. The interval 92–114 is disordered; it reads PAKQIPTQAPLTNQPWEGESKAH. Polar residues predominate over residues 96–106; sequence IPTQAPLTNQP. Positions 121-338 are domain III, AAA+ region; sequence NLIKKYTFDN…GAIANISAKA (218 aa). The ATP site is built by Gly-165, Gly-167, Lys-168, and Thr-169. The tract at residues 339–458 is domain IV, binds dsDNA; it reads QFTGQGITIS…YKILIRTLSM (120 aa).

This sequence belongs to the DnaA family. As to quaternary structure, oligomerizes as a right-handed, spiral filament on DNA at oriC.

It is found in the cytoplasm. In terms of biological role, plays an essential role in the initiation and regulation of chromosomal replication. ATP-DnaA binds to the origin of replication (oriC) to initiate formation of the DNA replication initiation complex once per cell cycle. Binds the DnaA box (a 9 base pair repeat at the origin) and separates the double-stranded (ds)DNA. Forms a right-handed helical filament on oriC DNA; dsDNA binds to the exterior of the filament while single-stranded (ss)DNA is stabiized in the filament's interior. The ATP-DnaA-oriC complex binds and stabilizes one strand of the AT-rich DNA unwinding element (DUE), permitting loading of DNA polymerase. After initiation quickly degrades to an ADP-DnaA complex that is not apt for DNA replication. Binds acidic phospholipids. This chain is Chromosomal replication initiator protein DnaA, found in Psychromonas ingrahamii (strain DSM 17664 / CCUG 51855 / 37).